The sequence spans 341 residues: Anthranilate phosphoribosyltransferase (341 aa).

Residues glycine 79, 82-83 (GD), threonine 87, 89-92 (NIST), 107-115 (KHGNRAVSS), and serine 119 each bind 5-phospho-alpha-D-ribose 1-diphosphate. Anthranilate is bound at residue glycine 79. Serine 91 contributes to the Mg(2+) binding site. Anthranilate is bound at residue asparagine 110. Position 165 (arginine 165) interacts with anthranilate. Residues aspartate 224 and glutamate 225 each contribute to the Mg(2+) site.

The protein belongs to the anthranilate phosphoribosyltransferase family. In terms of assembly, homodimer. The cofactor is Mg(2+).

The enzyme catalyses N-(5-phospho-beta-D-ribosyl)anthranilate + diphosphate = 5-phospho-alpha-D-ribose 1-diphosphate + anthranilate. The protein operates within amino-acid biosynthesis; L-tryptophan biosynthesis; L-tryptophan from chorismate: step 2/5. Functionally, catalyzes the transfer of the phosphoribosyl group of 5-phosphorylribose-1-pyrophosphate (PRPP) to anthranilate to yield N-(5'-phosphoribosyl)-anthranilate (PRA). This Bacillus cereus (strain B4264) protein is Anthranilate phosphoribosyltransferase.